Reading from the N-terminus, the 166-residue chain is Protein adg1 (166 aa).

The first 22 residues, 1–22 (MFLRSIFQTLCAVSFLAGSVFA), serve as a signal peptide directing secretion.

It localises to the endoplasmic reticulum. The polypeptide is Protein adg1 (adg1) (Schizosaccharomyces pombe (strain 972 / ATCC 24843) (Fission yeast)).